Consider the following 134-residue polypeptide: MASVIGYYGTGRRKTAVARVYLRPGDGKVKVNGKEYESLNDYFKNIAWTKHAIEPLEVTNTIGKFDLVIRVNGGGLSGQAGAVRLGIARALLQYDENLKPVLKKYKMLTRDPREVERKKYGLKKARRAPQFSKR.

The interval 114 to 134 is disordered; that stretch reads EVERKKYGLKKARRAPQFSKR. Basic residues predominate over residues 120-134; that stretch reads YGLKKARRAPQFSKR.

It belongs to the universal ribosomal protein uS9 family.

The protein is Small ribosomal subunit protein uS9 of Thermotoga neapolitana (strain ATCC 49049 / DSM 4359 / NBRC 107923 / NS-E).